Here is a 480-residue protein sequence, read N- to C-terminus: Bifunctional pantoate ligase/cytidylate kinase (480 aa).

The pantoate--beta-alanine ligase stretch occupies residues 1–243 (MPTMGGLHQG…CGTTRLIDHV (243 aa)). 4-11 (MGGLHQGH) is an ATP binding site. His11 serves as the catalytic Proton donor. Gln34 is a (R)-pantoate binding site. Gln34 serves as a coordination point for beta-alanine. 123–126 (GEKD) is a binding site for ATP. A (R)-pantoate-binding site is contributed by Gln129. ATP is bound by residues Val152 and 160 to 163 (LSSR). Positions 244 to 480 (FLMTRQPLVA…GEEAWPTPAG (237 aa)) are cytidylate kinase.

The protein in the N-terminal section; belongs to the pantothenate synthetase family. This sequence in the C-terminal section; belongs to the cytidylate kinase family. Type 1 subfamily.

The protein resides in the cytoplasm. It carries out the reaction (R)-pantoate + beta-alanine + ATP = (R)-pantothenate + AMP + diphosphate + H(+). The catalysed reaction is CMP + ATP = CDP + ADP. It catalyses the reaction dCMP + ATP = dCDP + ADP. The protein operates within cofactor biosynthesis; (R)-pantothenate biosynthesis; (R)-pantothenate from (R)-pantoate and beta-alanine: step 1/1. Catalyzes the condensation of pantoate with beta-alanine in an ATP-dependent reaction via a pantoyl-adenylate intermediate. In terms of biological role, catalyzes the transfer of a phosphate group from ATP to either CMP or dCMP to form CDP or dCDP and ADP, respectively. This chain is Bifunctional pantoate ligase/cytidylate kinase, found in Synechococcus sp. (strain CC9605).